The sequence spans 348 residues: Probable UDP-arabinopyranose mutase 5 (348 aa).

Positions 100–102 match the DXD motif motif; the sequence is DDD. An N-linked (Glc...) arginine glycan is attached at arginine 148.

This sequence belongs to the RGP family. Heteromers with RGP1 and RGP2. Mn(2+) is required as a cofactor. Requires Mg(2+) as cofactor. Post-translationally, reversibly glycosylated in vitro by UDP-glucose, UDP-xylose and UDP-galactose, but not UDP-mannose. In terms of tissue distribution, widely expressed at low levels.

Its subcellular location is the cytoplasm. It localises to the cytosol. The protein resides in the golgi apparatus. The catalysed reaction is UDP-beta-L-arabinofuranose = UDP-beta-L-arabinopyranose. Probable UDP-L-arabinose mutase involved in the biosynthesis of cell wall non-cellulosic polysaccharides. This is Probable UDP-arabinopyranose mutase 5 from Arabidopsis thaliana (Mouse-ear cress).